The following is a 329-amino-acid chain: Ceramide synthase hyl-2 (329 aa).

N-linked (GlcNAc...) asparagine glycosylation occurs at Asn-22. 7 consecutive transmembrane segments (helical) span residues 41-61 (VLTG…IFVP), 95-115 (ALYY…ESHL), 134-154 (VAWY…GILF), 162-182 (FWQM…SWTM), 187-207 (VGTL…VGKI), 221-241 (FAGV…FWII), and 270-290 (FIML…YILF). Residues 86 to 298 (SRMAECAMRA…LFKIAYDTIQ (213 aa)) form the TLC domain.

It belongs to the sphingosine N-acyltransferase family. In terms of tissue distribution, strong expression in the gut, the posterior bulb of the pharynx, the hypoderm, and unidentified cells of the head and the tail.

Its subcellular location is the membrane. The catalysed reaction is a very long-chain fatty acyl-CoA + a sphingoid base = an N-(very-long-chain fatty acyl)-sphingoid base + CoA + H(+). It catalyses the reaction a fatty acyl-CoA + sphinganine = an N-acylsphinganine + CoA + H(+). The enzyme catalyses docosanoyl-CoA + sphinganine = N-docosanoylsphinganine + CoA + H(+). It carries out the reaction sphinganine + tetradecanoyl-CoA = N-(tetradecanoyl)-sphinganine + CoA + H(+). The catalysed reaction is eicosanoyl-CoA + sphinganine = N-eicosanoylsphinganine + CoA + H(+). It catalyses the reaction 15-methylhexadecasphinganine + a fatty acyl-CoA = an N-acyl-15-methylhexadecasphinganine + CoA + H(+). It participates in lipid metabolism; sphingolipid metabolism. In terms of biological role, catalyzes the acylation of sphingoid bases to form ceramides, which are key players in cell signaling events such as tolerances to heat, oxidation, and ultraviolet stress. C.elegans contain specific sphingoid bases, which are unique or different in structure compared to the sphingoid bases found in other animals. Two examples of these distinctive compounds are: 15-methylhexadecasphinganine and 15-methylhexadecasphing-4-enine. Exhibits substrate preference for long and very long fatty acyl-coA chains (C20-23). Required for adaptation of the nematode to anoxia. Anoxia tolerance may require one or more of the ceramide species that are either specifically or preferentially synthesized by HYL-2, and seems to be affected by a pathway that is parallel to that involving daf-2. The chain is Ceramide synthase hyl-2 (hyl-2) from Caenorhabditis elegans.